Here is a 260-residue protein sequence, read N- to C-terminus: Acyl-coenzyme A diphosphatase FITM2 (260 aa).

Residues methionine 1–histidine 23 lie on the Cytoplasmic side of the membrane. A helical membrane pass occupies residues cysteine 24–leucine 44. At proline 45–asparagine 57 the chain is on the lumenal side. A helical membrane pass occupies residues valine 58–leucine 78. Residues threonine 79–arginine 93 are Cytoplasmic-facing. Residues leucine 94–isoleucine 114 traverse the membrane as a helical segment. Residues glutamate 115–glycine 144 are Lumenal-facing. The chain crosses the membrane as a helical span at residues phenylalanine 145 to isoleucine 165. The active site involves histidine 154. The Cytoplasmic portion of the chain corresponds to leucine 166–glutamine 189. Helical transmembrane passes span phenylalanine 190–tyrosine 210 and phenylalanine 211–threonine 231. Residue histidine 212 is part of the active site. Over tyrosine 232–asparagine 260 the chain is Cytoplasmic.

Belongs to the FIT family. FIT2 subfamily.

It localises to the endoplasmic reticulum membrane. It catalyses the reaction an acyl-CoA + H2O = an acyl-4'-phosphopantetheine + adenosine 3',5'-bisphosphate + 2 H(+). In terms of biological role, fatty acyl-coenzyme A (CoA) diphosphatase that hydrolyzes fatty acyl-CoA to yield acyl-4'-phosphopantetheine and adenosine 3',5'-bisphosphate. Preferentially hydrolyzes unsaturated long-chain acyl-CoA substrates in the endoplasmic reticulum (ER) lumen. This catalytic activity is required for maintaining ER structure and for lipid droplets (LDs) biogenesis, which are lipid storage organelles involved in maintaining lipid and energy homeostasis. May directly bind to diacylglycerol (DAGs) and triacylglycerol, which is also important for LD biogenesis. May support directional budding of nacent LDs from the ER into the cytosol by reducing DAG levels at sites of LD formation. May play a role in the regulation of cell morphology, ER morphology and cytoskeletal organization. The chain is Acyl-coenzyme A diphosphatase FITM2 from Xenopus laevis (African clawed frog).